The primary structure comprises 460 residues: Chromosomal replication initiator protein DnaA (460 aa).

The segment at 1-73 is domain I, interacts with DnaA modulators; it reads MEISIDSLWS…ANVVQSILGH (73 aa). The segment at 73-116 is domain II; the sequence is HPVEIYITVAKGEEFEEIGGGGAWELPTTNSIYETPNQNRQPNT. Residues 117-333 form a domain III, AAA+ region region; the sequence is ELNAKYVFSR…GALTRALAYI (217 aa). Residues G161, G163, K164, and T165 each contribute to the ATP site. The domain IV, binds dsDNA stretch occupies residues 334-460; that stretch reads SIWGLPMTVA…MNSRSRKPSL (127 aa).

It belongs to the DnaA family. In terms of assembly, oligomerizes as a right-handed, spiral filament on DNA at oriC.

The protein localises to the cytoplasm. Its function is as follows. Plays an essential role in the initiation and regulation of chromosomal replication. ATP-DnaA binds to the origin of replication (oriC) to initiate formation of the DNA replication initiation complex once per cell cycle. Binds the DnaA box (a 9 base pair repeat at the origin) and separates the double-stranded (ds)DNA. Forms a right-handed helical filament on oriC DNA; dsDNA binds to the exterior of the filament while single-stranded (ss)DNA is stabiized in the filament's interior. The ATP-DnaA-oriC complex binds and stabilizes one strand of the AT-rich DNA unwinding element (DUE), permitting loading of DNA polymerase. After initiation quickly degrades to an ADP-DnaA complex that is not apt for DNA replication. Binds acidic phospholipids. In Trichormus variabilis (strain ATCC 29413 / PCC 7937) (Anabaena variabilis), this protein is Chromosomal replication initiator protein DnaA.